The sequence spans 126 residues: UPF0538 protein C2orf76 homolog (126 aa).

It belongs to the UPF0538 family.

The polypeptide is UPF0538 protein C2orf76 homolog (Pongo abelii (Sumatran orangutan)).